Consider the following 380-residue polypeptide: Cytochrome b (380 aa).

4 consecutive transmembrane segments (helical) span residues 34–54, 78–99, 114–134, and 179–199; these read FGSLLAVCLMTQILTGLLLAM, WLIRNLHANGASFFFICIFLHI, WNTGVILLLTLMATAFVGYVL, and FFALHFLLPFAIAGITVVHLT. Heme b contacts are provided by H84 and H98. Heme b-binding residues include H183 and H197. Position 202 (H202) interacts with a ubiquinone. 4 consecutive transmembrane segments (helical) span residues 227 to 247, 289 to 309, 321 to 341, and 348 to 368; these read LKDILGLTLMLTPFLTLALFS, LGGVLALAASVLILFLIPFLH, LSQTLFWLLVANLLILTWIGS, and FMIIGQMASLSYFTILLILFP.

Belongs to the cytochrome b family. The cytochrome bc1 complex contains 11 subunits: 3 respiratory subunits (MT-CYB, CYC1 and UQCRFS1), 2 core proteins (UQCRC1 and UQCRC2) and 6 low-molecular weight proteins (UQCRH/QCR6, UQCRB/QCR7, UQCRQ/QCR8, UQCR10/QCR9, UQCR11/QCR10 and a cleavage product of UQCRFS1). This cytochrome bc1 complex then forms a dimer. Requires heme b as cofactor.

It localises to the mitochondrion inner membrane. Its function is as follows. Component of the ubiquinol-cytochrome c reductase complex (complex III or cytochrome b-c1 complex) that is part of the mitochondrial respiratory chain. The b-c1 complex mediates electron transfer from ubiquinol to cytochrome c. Contributes to the generation of a proton gradient across the mitochondrial membrane that is then used for ATP synthesis. In Gallus lafayettii (Sri Lanka junglefowl), this protein is Cytochrome b (MT-CYB).